We begin with the raw amino-acid sequence, 158 residues long: Cyclic pyranopterin monophosphate synthase (158 aa).

Residues 74-76 (MCH) and 112-113 (ME) contribute to the substrate site. Asp127 is an active-site residue.

It belongs to the MoaC family. In terms of assembly, homohexamer; trimer of dimers.

It catalyses the reaction (8S)-3',8-cyclo-7,8-dihydroguanosine 5'-triphosphate = cyclic pyranopterin phosphate + diphosphate. The protein operates within cofactor biosynthesis; molybdopterin biosynthesis. Catalyzes the conversion of (8S)-3',8-cyclo-7,8-dihydroguanosine 5'-triphosphate to cyclic pyranopterin monophosphate (cPMP). The sequence is that of Cyclic pyranopterin monophosphate synthase from Helicobacter pylori (strain HPAG1).